The chain runs to 289 residues: Bifunctional protein FolD 2 (289 aa).

Residues 162-164 (GRS), Ser-187, and Ile-228 contribute to the NADP(+) site.

It belongs to the tetrahydrofolate dehydrogenase/cyclohydrolase family. As to quaternary structure, homodimer.

It carries out the reaction (6R)-5,10-methylene-5,6,7,8-tetrahydrofolate + NADP(+) = (6R)-5,10-methenyltetrahydrofolate + NADPH. The enzyme catalyses (6R)-5,10-methenyltetrahydrofolate + H2O = (6R)-10-formyltetrahydrofolate + H(+). The protein operates within one-carbon metabolism; tetrahydrofolate interconversion. Catalyzes the oxidation of 5,10-methylenetetrahydrofolate to 5,10-methenyltetrahydrofolate and then the hydrolysis of 5,10-methenyltetrahydrofolate to 10-formyltetrahydrofolate. The sequence is that of Bifunctional protein FolD 2 from Deinococcus geothermalis (strain DSM 11300 / CIP 105573 / AG-3a).